We begin with the raw amino-acid sequence, 806 residues long: Exonuclease 1 (806 aa).

Positions 1-99 (MGIQGLLQFI…KSRRERRQAN (99 aa)) are N-domain. 7 residues coordinate Mg(2+): Asp30, Asp78, Glu150, Asp152, Asp171, Asp173, and Asp225. An I-domain region spans residues 138–229 (RTRGVDCVVA…ILSGCDYLQS (92 aa)). Disordered regions lie at residues 337-426 (RIDD…EDTS), 443-475 (HCPE…PFRP), and 512-754 (ETQE…SPGL). The segment covering 355–378 (RSSSWNDRCDKTATTQASIWSQNY) has biased composition (polar residues). Residues 412–425 (PQRESQVKRPREDT) show a composition bias toward basic and acidic residues. Composition is skewed to polar residues over residues 447 to 458 (TQPTTKPLTNDN), 533 to 542 (SQSGGDTSSL), and 578 to 589 (WSGTTKELNKSV). Positions 592–601 (PARDSTERQR) are enriched in basic and acidic residues. The segment covering 602-615 (SSSTPSGLSTLQQF) has biased composition (polar residues). The span at 651 to 670 (SQDSAYFSQSSSISASVENS) shows a compositional bias: low complexity. The segment covering 676–685 (NSDKEKERDS) has biased composition (basic and acidic residues). Residues 686-696 (VVSNSPSSSPL) show a composition bias toward low complexity. Residues 744 to 754 (KNVNNENSPGL) are compositionally biased toward polar residues.

It belongs to the XPG/RAD2 endonuclease family. EXO1 subfamily. Mg(2+) serves as cofactor.

The protein resides in the nucleus. In terms of biological role, 5'-&gt;3' double-stranded DNA exonuclease which may also contain a cryptic 3'-&gt;5' double-stranded DNA exonuclease activity. Also exhibits endonuclease activity against 5'-overhanging flap structures similar to those generated by displacement synthesis when DNA polymerase encounters the 5'-end of a downstream Okazaki fragment. Required for DNA mismatch repair (MMR). This is Exonuclease 1 (exo1) from Danio rerio (Zebrafish).